Here is a 202-residue protein sequence, read N- to C-terminus: Outer-membrane lipoprotein LolB (202 aa).

Positions 1-18 (MFRRTYFWLMLLPLFMVG) are cleaved as a signal peptide. A lipid anchor (N-palmitoyl cysteine) is attached at Cys19. Cys19 carries S-diacylglycerol cysteine lipidation.

This sequence belongs to the LolB family. In terms of assembly, monomer.

It is found in the cell outer membrane. In terms of biological role, plays a critical role in the incorporation of lipoproteins in the outer membrane after they are released by the LolA protein. This is Outer-membrane lipoprotein LolB from Vibrio vulnificus (strain YJ016).